A 222-amino-acid polypeptide reads, in one-letter code: Capsular polysaccharide type 8 biosynthesis protein cap8A (222 aa).

A run of 2 helical transmembrane segments spans residues I20–L40 and V172–F192.

This sequence belongs to the CpsC/CapA family.

It localises to the cell membrane. Functionally, required for the biosynthesis of type 8 capsular polysaccharide (Cap8/CP8). Might act as the chain-length regulator. This chain is Capsular polysaccharide type 8 biosynthesis protein cap8A (cap8A), found in Staphylococcus aureus.